We begin with the raw amino-acid sequence, 547 residues long: Fumarate reductase (CoM/CoB) subunit A (547 aa).

The protein belongs to the FAD-dependent oxidoreductase 2 family. As to quaternary structure, subunit A of the heterodimeric fumarate reductase of methanogenic Archaea, composed of subunits A (TfrA) and B (TfrB). An oxidized flavin is required as a cofactor.

The protein localises to the cytoplasm. It carries out the reaction coenzyme B + coenzyme M + fumarate = coenzyme M-coenzyme B heterodisulfide + succinate. Catalyzes the reduction of fumarate with reduced coenzyme M (CoM-S-H) and coenzyme B (CoB-S-H). In vitro, is able to reduces fumarate with reduced benzyl viologen, oxidize CoM-S-H and CoB-S-H to CoM-S-S-CoB with methylene blue, and reduce CoM-S-S-CoB with reduced benzyl viologen. The enzyme has specificity for the two thiol compounds as the CoB--CoM heterodisulfide reductase. The enzyme is very sensitive to oxygen. This Methanothermobacter marburgensis (strain ATCC BAA-927 / DSM 2133 / JCM 14651 / NBRC 100331 / OCM 82 / Marburg) (Methanobacterium thermoautotrophicum) protein is Fumarate reductase (CoM/CoB) subunit A.